Reading from the N-terminus, the 156-residue chain is Putative type II restriction enzyme ApeKORF2002P (156 aa).

To M.jannaschii MJ1199.

The enzyme catalyses Endonucleolytic cleavage of DNA to give specific double-stranded fragments with terminal 5'-phosphates.. A putative type II restriction enzyme, its methylase would be APE_2002. This Aeropyrum pernix (strain ATCC 700893 / DSM 11879 / JCM 9820 / NBRC 100138 / K1) protein is Putative type II restriction enzyme ApeKORF2002P.